A 117-amino-acid chain; its full sequence is EVKLVESGGDLVKPGGSLRLSCVASGFTFSSNGMSWVRQDPGEGLQWVADISSSGQTYYADAVKGRFSISRDNAKNTLYLQMEDLRVEDTAVYYCATEGDIEIPRYFGQGTIVTVSS.

An Ig-like domain is found at 1–116; sequence EVKLVESGGD…FGQGTIVTVS (116 aa).

The chain is Ig heavy chain V region MOO from Canis lupus familiaris (Dog).